Reading from the N-terminus, the 576-residue chain is Proline--tRNA ligase (576 aa).

This sequence belongs to the class-II aminoacyl-tRNA synthetase family. ProS type 1 subfamily. As to quaternary structure, homodimer.

It is found in the cytoplasm. It carries out the reaction tRNA(Pro) + L-proline + ATP = L-prolyl-tRNA(Pro) + AMP + diphosphate. Its function is as follows. Catalyzes the attachment of proline to tRNA(Pro) in a two-step reaction: proline is first activated by ATP to form Pro-AMP and then transferred to the acceptor end of tRNA(Pro). As ProRS can inadvertently accommodate and process non-cognate amino acids such as alanine and cysteine, to avoid such errors it has two additional distinct editing activities against alanine. One activity is designated as 'pretransfer' editing and involves the tRNA(Pro)-independent hydrolysis of activated Ala-AMP. The other activity is designated 'posttransfer' editing and involves deacylation of mischarged Ala-tRNA(Pro). The misacylated Cys-tRNA(Pro) is not edited by ProRS. This Bordetella pertussis (strain Tohama I / ATCC BAA-589 / NCTC 13251) protein is Proline--tRNA ligase.